A 256-amino-acid polypeptide reads, in one-letter code: Calsenilin (256 aa).

The segment at 1–22 is disordered; it reads MQRTKEAMKASDGSLLGDPGRI. The residue at position 14 (Ser14) is a Phosphoserine. Lys26 is covalently cross-linked (Glycyl lysine isopeptide (Lys-Gly) (interchain with G-Cter in SUMO1)). S-palmitoyl cysteine attachment occurs at residues Cys45 and Cys46. Residues Ser60 and Ser63 each carry the phosphoserine modification. Positions 67 to 123 constitute an EF-hand 1; degenerate domain; it reads LELSTVRHQPEGLDQLQAQTKFTKKELQSLYRGFKNECPTGLVDEDTFKLIYSQFFP. Residue Lys90 forms a Glycyl lysine isopeptide (Lys-Gly) (interchain with G-Cter in SUMO1) linkage. 3 consecutive EF-hand domains span residues 126–161, 162–197, and 210–245; these read DATT…LLRG, TVHE…IYDM, and APLE…DENI. Residues Asp175, Asn177, Asp179, Tyr181, Glu186, Asp223, Asn225, Asp227, and Glu234 each coordinate Ca(2+). Residues 243-256 are interaction with KCND2; it reads ENIMSSMQLFENVI.

The protein belongs to the recoverin family. In terms of assembly, binds to DNA as a homomultimer. Dimerization is induced by binding to calcium. Interacts with the C-terminus of PSEN1 and PSEN2 and with PSEN2 CTF subunit. Associates with KCN1. Component of heteromultimeric potassium channels. Identified in potassium channel complexes containing KCND1, KCND2, KCND3, KCNIP1, KCNIP2, KCNIP3, KCNIP4, DPP6 and DPP10. Interacts with KCND2 and KCND3. Post-translationally, palmitoylated. Palmitoylation enhances association with the plasma membrane. In terms of processing, proteolytically cleaved by caspase-3. As to expression, detected in brain cortex, thalamus, dentate gyrus and cerebellum (at protein level). Expressed in brain. Colocalizes with KCND2 in excitatory neurons including cortical and hippocampal CA1 pyramidal cells.

The protein localises to the cytoplasm. It is found in the cell membrane. The protein resides in the endoplasmic reticulum. Its subcellular location is the golgi apparatus. It localises to the nucleus. Functionally, calcium-dependent transcriptional repressor that binds to the DRE element of genes including PDYN and FOS. Affinity for DNA is reduced upon binding to calcium and enhanced by binding to magnesium. Seems to be involved in nociception. In terms of biological role, regulatory subunit of Kv4/D (Shal)-type voltage-gated rapidly inactivating A-type potassium channels, such as KCND2/Kv4.2 and KCND3/Kv4.3. Modulates channel expression at the cell membrane, gating characteristics, inactivation kinetics and rate of recovery from inactivation in a calcium-dependent and isoform-specific manner. May play a role in the regulation of PSEN2 proteolytic processing and apoptosis. Together with PSEN2 involved in modulation of amyloid-beta formation. The protein is Calsenilin (Kcnip3) of Rattus norvegicus (Rat).